Here is a 347-residue protein sequence, read N- to C-terminus: Heat-inducible transcription repressor HrcA (347 aa).

This sequence belongs to the HrcA family.

Functionally, negative regulator of class I heat shock genes (grpE-dnaK-dnaJ and groELS operons). Prevents heat-shock induction of these operons. The polypeptide is Heat-inducible transcription repressor HrcA (Mycoplasmopsis pulmonis (strain UAB CTIP) (Mycoplasma pulmonis)).